Reading from the N-terminus, the 194-residue chain is CASP-like protein 4D1 (194 aa).

Over 1–10 the chain is Cytoplasmic; sequence MASRTVLLPS. The chain crosses the membrane as a helical span at residues 11-31; the sequence is AVLILRLLSLGLLAASLALIA. The Extracellular portion of the chain corresponds to 32–55; that stretch reads ADKLNVDSDPPQRYTFRDVYAYRY. Residues 56–76 form a helical membrane-spanning segment; it reads VLAVAVIGCAYTLLQLPLAAV. At 77–94 the chain is on the cytoplasmic side; it reads SIIASGNNKRGIGAGGGS. The chain crosses the membrane as a helical span at residues 95 to 115; the sequence is VAVALLVLVLLADVVFALLLA. Topologically, residues 116-161 are extracellular; it reads TGAAAGFAFTYDVKRYLDGQFDDDSIGTPEVDKLHRDMDKFFDLAY. Residues 162-182 traverse the membrane as a helical segment; that stretch reads AAAGLMLAAAACMALVIMLSV. At 183-194 the chain is on the cytoplasmic side; sequence YSLARQVRSDYI.

The protein belongs to the Casparian strip membrane proteins (CASP) family. As to quaternary structure, homodimer and heterodimers.

The protein resides in the cell membrane. This chain is CASP-like protein 4D1, found in Sorghum bicolor (Sorghum).